The primary structure comprises 293 residues: Formamidopyrimidine-DNA glycosylase (293 aa).

The Schiff-base intermediate with DNA role is filled by Pro2. Glu3 functions as the Proton donor in the catalytic mechanism. Lys58 functions as the Proton donor; for beta-elimination activity in the catalytic mechanism. 3 residues coordinate DNA: His104, Arg123, and Lys166. The FPG-type zinc finger occupies 257 to 293 (QVYDREGEPCRTDGCGGVVKRFVQNGRSTFWCPKCQR). The active-site Proton donor; for delta-elimination activity is the Arg283.

Belongs to the FPG family. Monomer. Requires Zn(2+) as cofactor.

The catalysed reaction is Hydrolysis of DNA containing ring-opened 7-methylguanine residues, releasing 2,6-diamino-4-hydroxy-5-(N-methyl)formamidopyrimidine.. It carries out the reaction 2'-deoxyribonucleotide-(2'-deoxyribose 5'-phosphate)-2'-deoxyribonucleotide-DNA = a 3'-end 2'-deoxyribonucleotide-(2,3-dehydro-2,3-deoxyribose 5'-phosphate)-DNA + a 5'-end 5'-phospho-2'-deoxyribonucleoside-DNA + H(+). Involved in base excision repair of DNA damaged by oxidation or by mutagenic agents. Acts as a DNA glycosylase that recognizes and removes damaged bases. Has a preference for oxidized purines, such as 7,8-dihydro-8-oxoguanine (8-oxoG). Has AP (apurinic/apyrimidinic) lyase activity and introduces nicks in the DNA strand. Cleaves the DNA backbone by beta-delta elimination to generate a single-strand break at the site of the removed base with both 3'- and 5'-phosphates. In Bradyrhizobium sp. (strain BTAi1 / ATCC BAA-1182), this protein is Formamidopyrimidine-DNA glycosylase.